The sequence spans 112 residues: PTS system lactose-specific EIIA component (112 aa).

One can recognise a PTS EIIA type-3 domain in the interval 6 to 104 (EEISMVGFAL…TRYMIRMFKR (99 aa)). The Tele-phosphohistidine intermediate role is filled by His-80. Position 80 is a phosphohistidine; by HPr (His-80). Asp-83 lines the Mg(2+) pocket.

Homotrimer. Mg(2+) serves as cofactor.

It is found in the cytoplasm. The phosphoenolpyruvate-dependent sugar phosphotransferase system (sugar PTS), a major carbohydrate active transport system, catalyzes the phosphorylation of incoming sugar substrates concomitantly with their translocation across the cell membrane. The enzyme II LacEF PTS system is involved in lactose transport. The polypeptide is PTS system lactose-specific EIIA component (Lacticaseibacillus casei (Lactobacillus casei)).